A 584-amino-acid chain; its full sequence is MERLVFCVLVFGALAKAQLCPGRCICQTISPTLTLLCAKTGLLFVPPTVDRKTVELRLTDNFITAVRRKDFLNMTSLVHLTLSRNTISQIAPHAFMGLKSLRALHMDGNRLSVINSDQLKGLMNLRHLILGNNQIHHIEESSFDEFVATIEDLDLSYNNLRTLPWEAIARMTNINTLTLDHNLIDHIGVGTFTLLTKLVRLDMTSNRLQTLPPDTLFQHAQVLSEPKTSSSSRLTVSFGGNPLHCNCELLWLRRLTREDDLETCASPEHLMDKYFWSIQEEEFICEPPLITKHQVTKPYVMEGQGVTLKCKAMGDPDPAIHWRFPDGKLVHNNSRTILYDNGTLDILITTLKDSGAFNCVASNAAGIATAAVHVHMIPLPLLVNNTGHMREADPGLSDISTSSRSSSNDSKTHSKRVLVENLTAHSAVIHWPSERHIPGIRMYQIQYELCVLAVYDDGITSLTATRVVGCVHFHTLPETNQCRFVPSQFLGGTMIIIIGGIIVASVLVFIIILMIRYKAYSGGGGDTAKAKAGGDVSVHVHSQTNGSRSAATKQSEEPPESPAGKHCKALVLLKMVLPILHLLF.

The signal sequence occupies residues 1–17 (MERLVFCVLVFGALAKA). In terms of domain architecture, LRRNT spans 18-51 (QLCPGRCICQTISPTLTLLCAKTGLLFVPPTVDR). At 18–494 (QLCPGRCICQ…VPSQFLGGTM (477 aa)) the chain is on the extracellular side. LRR repeat units lie at residues 52–73 (KTVE…DFLN), 76–97 (SLVH…AFMG), 100–121 (SLRA…QLKG), 124–145 (NLRH…SFDE), 149–170 (TIED…AIAR), 173–194 (NINT…TFTL), and 197–218 (KLVR…TLFQ). N73 is a glycosylation site (N-linked (GlcNAc...) asparagine). An LRRCT domain is found at 241–287 (NPLHCNCELLWLRRLTREDDLETCASPEHLMDKYFWSIQEEEFICEP). The region spanning 288 to 375 (PLITKHQVTK…GIATAAVHVH (88 aa)) is the Ig-like domain. Residues C310 and C359 are joined by a disulfide bond. Residues N332, N341, N384, N408, and N421 are each glycosylated (N-linked (GlcNAc...) asparagine). The disordered stretch occupies residues 393–414 (DPGLSDISTSSRSSSNDSKTHS). Low complexity predominate over residues 397 to 409 (SDISTSSRSSSND). The chain crosses the membrane as a helical span at residues 495 to 515 (IIIIGGIIVASVLVFIIILMI). The Cytoplasmic portion of the chain corresponds to 516 to 584 (RYKAYSGGGG…MVLPILHLLF (69 aa)). A disordered region spans residues 539–564 (HVHSQTNGSRSAATKQSEEPPESPAG). The span at 540–553 (VHSQTNGSRSAATK) shows a compositional bias: polar residues.

It belongs to the LRFN family.

The protein localises to the membrane. Its subcellular location is the synapse. Its function is as follows. Involved in the regulation of excitatory synapses. This is Leucine-rich repeat and fibronectin type III domain-containing protein 1 (lrfn1) from Danio rerio (Zebrafish).